The primary structure comprises 94 residues: Co-chaperonin GroES (94 aa).

This sequence belongs to the GroES chaperonin family. In terms of assembly, heptamer of 7 subunits arranged in a ring. Interacts with the chaperonin GroEL.

The protein localises to the cytoplasm. Functionally, together with the chaperonin GroEL, plays an essential role in assisting protein folding. The GroEL-GroES system forms a nano-cage that allows encapsulation of the non-native substrate proteins and provides a physical environment optimized to promote and accelerate protein folding. GroES binds to the apical surface of the GroEL ring, thereby capping the opening of the GroEL channel. The chain is Co-chaperonin GroES from Clostridium botulinum (strain Alaska E43 / Type E3).